The sequence spans 238 residues: Probable septum site-determining protein MinC (238 aa).

It belongs to the MinC family. Interacts with MinD and FtsZ.

Cell division inhibitor that blocks the formation of polar Z ring septums. Rapidly oscillates between the poles of the cell to destabilize FtsZ filaments that have formed before they mature into polar Z rings. Prevents FtsZ polymerization. The sequence is that of Probable septum site-determining protein MinC from Aeromonas salmonicida (strain A449).